The chain runs to 420 residues: Glucose-1-phosphate adenylyltransferase (420 aa).

Residues Tyr107, Gly172, 187-188, and Ser205 contribute to the alpha-D-glucose 1-phosphate site; that span reads EK.

It belongs to the bacterial/plant glucose-1-phosphate adenylyltransferase family. As to quaternary structure, homotetramer.

The enzyme catalyses alpha-D-glucose 1-phosphate + ATP + H(+) = ADP-alpha-D-glucose + diphosphate. It participates in glycan biosynthesis; glycogen biosynthesis. Functionally, involved in the biosynthesis of ADP-glucose, a building block required for the elongation reactions to produce glycogen. Catalyzes the reaction between ATP and alpha-D-glucose 1-phosphate (G1P) to produce pyrophosphate and ADP-Glc. This chain is Glucose-1-phosphate adenylyltransferase, found in Sinorhizobium fredii (strain NBRC 101917 / NGR234).